Reading from the N-terminus, the 289-residue chain is Phospholipase C (289 aa).

Positions 1-25 (MKFKKVVLGMCLIASVLVFPVTIKA) are cleaved as a signal peptide. The propeptide occupies 26–51 (NACCDEYLQTPAAPHDIDSKLPHKLS). Zn(2+)-binding residues include Trp-52, His-65, Asp-106, His-120, His-169, Asp-173, His-179, His-193, and Glu-197. The Zn-dependent PLC domain occupies 52 to 289 (WSADNPTNTD…LEFWSKKTNE (238 aa)).

It belongs to the bacterial zinc-metallophospholipase C family. As to quaternary structure, forms monomers, dimers and higher order oligomers, but only the monomer is enzymatically active. Requires Zn(2+) as cofactor.

The protein localises to the secreted. It catalyses the reaction a 1,2-diacyl-sn-glycero-3-phosphocholine + H2O = phosphocholine + a 1,2-diacyl-sn-glycerol + H(+). The catalysed reaction is 1,2-dihexadecanoyl-sn-glycero-3-phosphocholine + H2O = 1,2-dihexadecanoyl-sn-glycerol + phosphocholine + H(+). It carries out the reaction 1-hexadecanoyl-2-(9Z-octadecenoyl)-sn-glycero-3-phosphocholine + H2O = 1-hexadecanoyl-2-(9Z-octadecenoyl)-sn-glycerol + phosphocholine + H(+). The enzyme catalyses 1,2-di-(9Z-octadecenoyl)-sn-glycero-3-phosphocholine + H2O = 1,2-di-(9Z-octadecenoyl)-sn-glycerol + phosphocholine + H(+). It catalyses the reaction a 1,2-diacyl-sn-glycero-3-phosphoethanolamine + H2O = phosphoethanolamine + a 1,2-diacyl-sn-glycerol + H(+). The catalysed reaction is 1,2-di-(9Z-octadecenoyl)-sn-glycero-3-phosphoethanolamine + H2O = phosphoethanolamine + 1,2-di-(9Z-octadecenoyl)-sn-glycerol + H(+). It carries out the reaction 1,2-dihexadecanoyl-sn-glycero-3-phosphoethanolamine + H2O = 1,2-dihexadecanoyl-sn-glycerol + phosphoethanolamine + H(+). The enzyme catalyses a 1,2-diacyl-sn-glycero-3-phospho-L-serine + H2O = O-phospho-L-serine + a 1,2-diacyl-sn-glycerol + H(+). It catalyses the reaction a 1,2-diacyl-sn-glycero-3-phosphoglycerol + H2O = glycerol 1-phosphate + a 1,2-diacyl-sn-glycerol + H(+). The catalysed reaction is a 1,2-diacyl-sn-glycero-3-phospho-(1D-myo-inositol) + H2O = 1D-myo-inositol 1-phosphate + a 1,2-diacyl-sn-glycerol + H(+). It carries out the reaction a sphingomyelin + H2O = phosphocholine + an N-acylsphing-4-enine + H(+). The enzyme catalyses a 1-O-(1Z-alkenyl)-2-acyl-sn-glycero-3-phosphoethanolamine + H2O = a 1-O-(1Z-alkenyl)-2-acyl-sn-glycerol + phosphoethanolamine + H(+). With respect to regulation, enzymatic activity of LmPC-PLC can be specifically inhibited by its propeptide added in trans. The tendency of the enzyme to oligomerize, which appears to largely attenuate the enzymatic activity, may be one of the mechanisms regulating phospholipase activity in the host cell during the different steps of the infection cycle of L.monocytogenes. Enzyme activity is inhibited by EDTA and o-phenanthroline in vitro. In terms of biological role, major virulence factor whose phospholipase activity facilitates pore formation by the pore-forming toxin listeriolysin O (LLO), leading to vacuolar membrane disruption and vacuolar escape of L.monocytogenes, which enables the bacterium to spread in the host. Acts as a phospholipase C exhibiting broad substrate specificity, with the highest activities towards diacylglycerophospholipids with phosphocholine, phosphoserine, and phosphoethanolamine head groups, but less towards phosphoglycerol or phosphoinositol head groups. Is also able to hydrolyze sphingomyelin and plasmenylethanolamine. The protein is Phospholipase C of Listeria monocytogenes serovar 1/2a (strain ATCC BAA-679 / EGD-e).